A 520-amino-acid polypeptide reads, in one-letter code: Anthranilate synthase component 1 (520 aa).

Residues S40, K50, and P291–M293 each bind L-tryptophan. G328–T329 lines the chorismate pocket. E361 lines the Mg(2+) pocket. Residues Y449, R469, G483–G485, and G485 contribute to the chorismate site. Mg(2+) is bound at residue E498.

This sequence belongs to the anthranilate synthase component I family. Homodimer. In fact, exists in a monomer-dimer equilibrium in solution, shifted spontaneously in favor of the dimer; the monomer has a reduced activity compared with the dimer. Heterotetramer consisting of two non-identical subunits: a beta subunit (TrpG) and a large alpha subunit (TrpE) (Potential). It depends on Mg(2+) as a cofactor.

It carries out the reaction chorismate + L-glutamine = anthranilate + pyruvate + L-glutamate + H(+). Its pathway is amino-acid biosynthesis; L-tryptophan biosynthesis; L-tryptophan from chorismate: step 1/5. With respect to regulation, cooperatively feedback inhibited by tryptophan. Functionally, part of a heterotetrameric complex that catalyzes the two-step biosynthesis of anthranilate, an intermediate in the biosynthesis of L-tryptophan. In the first step, the glutamine-binding beta subunit (TrpG) of anthranilate synthase (AS) provides the glutamine amidotransferase activity which generates ammonia as a substrate that, along with chorismate, is used in the second step, catalyzed by the large alpha subunit of AS (TrpE) to produce anthranilate. In the absence of TrpG, TrpE can synthesize anthranilate directly from chorismate and high concentrations of ammonia. The protein is Anthranilate synthase component 1 (trpE) of Salmonella typhimurium (strain LT2 / SGSC1412 / ATCC 700720).